Reading from the N-terminus, the 231-residue chain is Sugar fermentation stimulation protein homolog (231 aa).

Belongs to the SfsA family.

The chain is Sugar fermentation stimulation protein homolog from Citrifermentans bemidjiense (strain ATCC BAA-1014 / DSM 16622 / JCM 12645 / Bem) (Geobacter bemidjiensis).